The sequence spans 227 residues: Uracil-DNA glycosylase (227 aa).

The Proton acceptor role is filled by aspartate 68.

The protein belongs to the uracil-DNA glycosylase (UDG) superfamily. UNG family.

The protein localises to the cytoplasm. The enzyme catalyses Hydrolyzes single-stranded DNA or mismatched double-stranded DNA and polynucleotides, releasing free uracil.. Its function is as follows. Excises uracil residues from the DNA which can arise as a result of misincorporation of dUMP residues by DNA polymerase or due to deamination of cytosine. The chain is Uracil-DNA glycosylase from Mycobacterium sp. (strain JLS).